The sequence spans 488 residues: L-arabinose isomerase 1 (488 aa).

The Mn(2+) site is built by glutamate 306, glutamate 331, histidine 348, and histidine 447.

The protein belongs to the arabinose isomerase family. Mn(2+) is required as a cofactor.

It catalyses the reaction beta-L-arabinopyranose = L-ribulose. The protein operates within carbohydrate degradation; L-arabinose degradation via L-ribulose; D-xylulose 5-phosphate from L-arabinose (bacterial route): step 1/3. Catalyzes the conversion of L-arabinose to L-ribulose. This chain is L-arabinose isomerase 1, found in Clostridium acetobutylicum (strain ATCC 824 / DSM 792 / JCM 1419 / IAM 19013 / LMG 5710 / NBRC 13948 / NRRL B-527 / VKM B-1787 / 2291 / W).